Consider the following 228-residue polypeptide: UPF0173 metal-dependent hydrolase PTH_1415 (228 aa).

Belongs to the UPF0173 family.

This Pelotomaculum thermopropionicum (strain DSM 13744 / JCM 10971 / SI) protein is UPF0173 metal-dependent hydrolase PTH_1415.